The chain runs to 89 residues: Small ribosomal subunit protein uS15 (89 aa).

The protein belongs to the universal ribosomal protein uS15 family. As to quaternary structure, part of the 30S ribosomal subunit. Forms a bridge to the 50S subunit in the 70S ribosome, contacting the 23S rRNA.

Functionally, one of the primary rRNA binding proteins, it binds directly to 16S rRNA where it helps nucleate assembly of the platform of the 30S subunit by binding and bridging several RNA helices of the 16S rRNA. In terms of biological role, forms an intersubunit bridge (bridge B4) with the 23S rRNA of the 50S subunit in the ribosome. The chain is Small ribosomal subunit protein uS15 from Chromobacterium violaceum (strain ATCC 12472 / DSM 30191 / JCM 1249 / CCUG 213 / NBRC 12614 / NCIMB 9131 / NCTC 9757 / MK).